The following is a 68-amino-acid chain: UPF0435 protein SAB1812c (68 aa).

Belongs to the UPF0435 family.

This Staphylococcus aureus (strain bovine RF122 / ET3-1) protein is UPF0435 protein SAB1812c.